The following is a 429-amino-acid chain: Glutamate-1-semialdehyde 2,1-aminomutase (429 aa).

Lys265 carries the post-translational modification N6-(pyridoxal phosphate)lysine.

Belongs to the class-III pyridoxal-phosphate-dependent aminotransferase family. HemL subfamily. As to quaternary structure, homodimer. Pyridoxal 5'-phosphate serves as cofactor.

It is found in the cytoplasm. The enzyme catalyses (S)-4-amino-5-oxopentanoate = 5-aminolevulinate. The protein operates within porphyrin-containing compound metabolism; protoporphyrin-IX biosynthesis; 5-aminolevulinate from L-glutamyl-tRNA(Glu): step 2/2. The protein is Glutamate-1-semialdehyde 2,1-aminomutase of Azotobacter vinelandii (strain DJ / ATCC BAA-1303).